Consider the following 557-residue polypeptide: IgE-binding protein (557 aa).

Positions 113–172 are disordered; sequence DGLGKPALSSSEAGEESSSEETDWEEEAAHYQPANWSRKKPKAAGEGQFADWPQGSRLQG. Acidic residues predominate over residues 125–138; it reads AGEESSSEETDWEE. The region spanning 344–534 is the Integrase catalytic domain; it reads TAIRPGRRSR…TAAERHVQSQ (191 aa).

The chain is IgE-binding protein (Iap) from Mus musculus (Mouse).